A 148-amino-acid chain; its full sequence is UPF0756 membrane protein YeaL (148 aa).

4 consecutive transmembrane segments (helical) span residues 14 to 34, 51 to 71, 80 to 100, and 121 to 141; these read ALGFVSHNTTVAVSILVLIIV, LTIGIIILTIGVMAPIASGSL, FFNWKSLVAIAVGVIVSWLGG, and VLGVALFRGVPVGPLIAAGLV.

It belongs to the UPF0756 family.

Its subcellular location is the cell membrane. In Escherichia fergusonii (strain ATCC 35469 / DSM 13698 / CCUG 18766 / IAM 14443 / JCM 21226 / LMG 7866 / NBRC 102419 / NCTC 12128 / CDC 0568-73), this protein is UPF0756 membrane protein YeaL.